A 165-amino-acid polypeptide reads, in one-letter code: Interferon gamma (165 aa).

The signal sequence occupies residues 1–23 (MKYTSYILAFQLCIVLGSLGCYC). The residue at position 24 (Q24) is a Pyrrolidone carboxylic acid. Residues N48 and N120 are each glycosylated (N-linked (GlcNAc...) asparagine).

Belongs to the type II (or gamma) interferon family. Homodimer. Interacts with IFNGR1 (via extracellular domain); this interaction promotes IFNGR1 dimerization.

It localises to the secreted. In terms of biological role, type II interferon produced by immune cells such as T-cells and NK cells that plays crucial roles in antimicrobial, antiviral, and antitumor responses by activating effector immune cells and enhancing antigen presentation. Primarily signals through the JAK-STAT pathway after interaction with its receptor IFNGR1 to affect gene regulation. Upon IFNG binding, IFNGR1 intracellular domain opens out to allow association of downstream signaling components JAK2, JAK1 and STAT1, leading to STAT1 activation, nuclear translocation and transcription of IFNG-regulated genes. Many of the induced genes are transcription factors such as IRF1 that are able to further drive regulation of a next wave of transcription. Plays a role in class I antigen presentation pathway by inducing a replacement of catalytic proteasome subunits with immunoproteasome subunits. In turn, increases the quantity, quality, and repertoire of peptides for class I MHC loading. Increases the efficiency of peptide generation also by inducing the expression of activator PA28 that associates with the proteasome and alters its proteolytic cleavage preference. Up-regulates as well MHC II complexes on the cell surface by promoting expression of several key molecules such as cathepsins B/CTSB, H/CTSH, and L/CTSL. Participates in the regulation of hematopoietic stem cells during development and under homeostatic conditions by affecting their development, quiescence, and differentiation. The chain is Interferon gamma (IFNG) from Papio anubis (Olive baboon).